The chain runs to 531 residues: MLFRSLLSTAVLAVSLCTDNASAAKHGRFGQKARDAMNIAKRSANAVKHSLKIPVEDYQFLNNKTKPYRVESLPDVHFDLGEMYSGLVPIEKGNVSRSLFFVFQPTIGEPVDEITIWLNGGPGCSSLEAFLQENGRFVWQPGTYQPVENPYSWVNLTNVLWVDQPVGTGFSLGVPTATSEEEIAEDFVKFFKNWQQIFGIKNFKIYVTGESYAGRYVPYISAAFLDQNDTEHFNLKGALAYDPCIGQFDYVQEEAPVVPFVQKNNALFNFNASFLAELESIHEQCGYKDFIDQYLVFPASGVQPPKAMNWSDPTCDVYDIVNNAVLDPNPCFNPYEINEMCPILWDVLGFPTEVDYLPAGASIYFDRADVKRAMHAPNITWSECSVESVFVGGDGGPEQEGDYSANPIEHVLPQVIEGTNRVLIGNGDYDMVILTNGTLLSIQNMTWNGKLGFDTAPSTPINIDIPDLMYNEVFIENGYDPQGGQGVMGIQHYERGLMWAETFQSGHMQPQFQPRVSYRHLEWLLGRRDTL.

The signal sequence occupies residues 1–25 (MLFRSLLSTAVLAVSLCTDNASAAK). A glycan (N-linked (GlcNAc...) asparagine) is linked at N20. The propeptide occupies 26 to 52 (HGRFGQKARDAMNIAKRSANAVKHSLK). N-linked (GlcNAc...) asparagine glycans are attached at residues N63, N94, and N155. S211 is a catalytic residue. 4 N-linked (GlcNAc...) asparagine glycosylation sites follow: N228, N271, N309, and N378. Residue D430 is part of the active site. N-linked (GlcNAc...) asparagine glycans are attached at residues N436 and N444. The active site involves H507.

It belongs to the peptidase S10 family. Monomer.

Its activity is regulated as follows. Inhibited by DFP, and Hg(Cl)2. Functionally, removes any amino acid from the C-terminus of a long peptide. Digests preferentially peptides containing a positively charged residue in P1' position, as well as arginine, lysine or phenylalanine in P1 position of ester substrate. Also catalyzes peptide synthesis. The polypeptide is Serine-type carboxypeptidase F (pepF) (Aspergillus niger).